Consider the following 225-residue polypeptide: MPSKQVGWWTMSEHTNDEVQPTALSGNDAVNRAAEQWKESAHRNIPGLGDLPIPDDTANLREGPNLHDGLLALLPLVGVWRGTGHADTAEEGQYAFGQQITFAHDGENYLTYESRIWKLDDEGNSTDLDYRESGFWRISLKDEIEVVLTHSTGVAEIFYGEPMNERAWQIESASTMVTAQGPATLGPGKRLYGLMPNNNLGWVDERMVDGEMRPRMSAELSRVIG.

A GXWXGXG motif is present at residues 78 to 84 (GVWRGTG).

It belongs to the nitrobindin family.

In Corynebacterium diphtheriae (strain ATCC 700971 / NCTC 13129 / Biotype gravis), this protein is Ferric nitrobindin-like protein.